The primary structure comprises 638 residues: Chaperone protein HtpG (638 aa).

An a; substrate-binding region spans residues 1–328; the sequence is MGDVEELKFS…SSDLPLNISR (328 aa). The tract at residues 329-558 is b; that stretch reads ETLQNNMVIE…EHALDIRMER (230 aa). Residues 484 to 508 are disordered; that stretch reads LEKFTEGDDQQSTKKKKEKKDTDDA. The segment at 559-638 is c; the sequence is FLREQKQLSY…NQVLARLFKK (80 aa).

It belongs to the heat shock protein 90 family. In terms of assembly, homodimer.

The protein localises to the cytoplasm. Its function is as follows. Molecular chaperone. Has ATPase activity. The protein is Chaperone protein HtpG of Anaplasma marginale (strain St. Maries).